A 548-amino-acid chain; its full sequence is Medium/long-chain-fatty-acid--CoA/3-oxocholest-4-en-26-oate--CoA ligase (548 aa).

ATP is bound by residues 174-182, Asp415, Arg430, and Lys521; that span reads TGGTTGFPK. Basic and acidic residues predominate over residues 520-541; sequence GKPDYRWAKEQTEARPADDVHA. Positions 520 to 548 are disordered; the sequence is GKPDYRWAKEQTEARPADDVHAGHVTSGG.

This sequence belongs to the ATP-dependent AMP-binding enzyme family.

The catalysed reaction is a medium-chain fatty acid + ATP + CoA = a medium-chain fatty acyl-CoA + AMP + diphosphate. The enzyme catalyses a long-chain fatty acid + ATP + CoA = a long-chain fatty acyl-CoA + AMP + diphosphate. It catalyses the reaction (25S)-3-oxocholest-4-en-26-oate + ATP + CoA = (25S)-3-oxocholest-4-en-26-oyl-CoA + AMP + diphosphate. It participates in lipid metabolism; fatty acid biosynthesis. Its pathway is steroid metabolism; cholesterol metabolism. Catalyzes the activation of medium/long-chain fatty acids as acyl-coenzyme A (acyl-CoA), which are then transferred to the multifunctional polyketide synthase (PKS) type III for further chain extension. Also involved in the degradation of cholesterol via the degradation of the side chains of C-24 branched-chain sterols. Catalyzes the ATP-dependent CoA thioesterification of the sterol 3-oxocholest-4-en-26-oate to yield 3-oxocholest-4-en-26-oyl-CoA. The sequence is that of Medium/long-chain-fatty-acid--CoA/3-oxocholest-4-en-26-oate--CoA ligase from Mycobacterium bovis (strain ATCC BAA-935 / AF2122/97).